The sequence spans 575 residues: Golgi-associated kinase 1A (575 aa).

The first 29 residues, 1–29, serve as a signal peptide directing secretion; the sequence is MASWLRRKLRGKRRPVIAFCLLMILSAMA. Residues 30–119 constitute a propeptide, removed in mature form; it reads VTRFPPQRPS…GDLRHPGRVR (90 aa). Positions 53–58 are O-glycosylated at one site; sequence TGAPAT. Over residues 143–153 the composition is skewed to basic and acidic residues; sequence VGDPGTKDLGH. Residues 143-162 are disordered; it reads VGDPGTKDLGHPQHGSPIQE. Residues 437–575 constitute a propeptide, removed in mature form; sequence RYCCGFEPEP…NLTLFRDEDP (139 aa). N566 is a glycosylation site (N-linked (GlcNAc...) asparagine).

Belongs to the GASK family. Post-translationally, O-glycosylated with core 1 or possibly core 8 glycans. Proteolytically cleaved. Cleaved at Arg-120 and Arg-437 leading to a processed mature product of 35 kDa. The cleavage takes place in the Golgi apparatus. Expressed in skin, lung and colon (at protein level).

The protein localises to the secreted. It is found in the endoplasmic reticulum. The protein resides in the golgi apparatus. It localises to the membrane. Its subcellular location is the caveola. The chain is Golgi-associated kinase 1A from Homo sapiens (Human).